The chain runs to 529 residues: UDP-glucuronosyltransferase 2B18 (529 aa).

Positions 1-21 (MSVKWTSVILLIQLSFYFSSG) are cleaved as a signal peptide. Residues Asn67 and Asn68 are each glycosylated (N-linked (GlcNAc...) asparagine). Residues 493-513 (VIGFLLACVATVIFIIMKCCL) form a helical membrane-spanning segment.

The protein belongs to the UDP-glycosyltransferase family. In terms of tissue distribution, expressed in liver, prostate, kidney, testis, adrenal, bile duct, bladder, colon, small intestine, cerebellum and pancreas.

Its subcellular location is the microsome membrane. It localises to the endoplasmic reticulum membrane. The enzyme catalyses glucuronate acceptor + UDP-alpha-D-glucuronate = acceptor beta-D-glucuronoside + UDP + H(+). In terms of biological role, UDPGT is of major importance in the conjugation and subsequent elimination of potentially toxic xenobiotics and endogenous compounds. This isozyme displays activity toward 3-hydroxyandrogens. It is principally active on C19 steroids having a hydroxyl group at position 3-alpha of the steroid molecule and also active on planar phenols and bile acids. The protein is UDP-glucuronosyltransferase 2B18 (UGT2B18) of Macaca fascicularis (Crab-eating macaque).